A 293-amino-acid polypeptide reads, in one-letter code: 33 kDa chaperonin (293 aa).

2 disulfide bridges follow: C237–C239 and C271–C274.

Belongs to the HSP33 family. Under oxidizing conditions two disulfide bonds are formed involving the reactive cysteines. Under reducing conditions zinc is bound to the reactive cysteines and the protein is inactive.

The protein resides in the cytoplasm. In terms of biological role, redox regulated molecular chaperone. Protects both thermally unfolding and oxidatively damaged proteins from irreversible aggregation. Plays an important role in the bacterial defense system toward oxidative stress. This chain is 33 kDa chaperonin, found in Haemophilus influenzae (strain 86-028NP).